The following is a 744-amino-acid chain: FNIP repeat-containing protein cigB (744 aa).

FNIP repeat units follow at residues 340–376, 383–422, 426–462, 469–508, 512–550, 555–594, 598–635, 641–678, and 684–723; these read FNQK…TVTT, FNQK…TVIL, FNQK…TVTR, FNQK…TITL, FNQK…TTVR, FNQK…VTTV, and FNQK…NVYI.

The polypeptide is FNIP repeat-containing protein cigB (cigB) (Dictyostelium discoideum (Social amoeba)).